We begin with the raw amino-acid sequence, 244 residues long: 2,5-diamino-6-ribosylamino-4(3H)-pyrimidinone 5'-phosphate reductase (244 aa).

NADP(+) contacts are provided by residues Thr-79, Asp-83, Val-159, and 182–186 (GANVI).

It belongs to the HTP reductase family. In terms of assembly, homodimer.

It catalyses the reaction 2,5-diamino-6-(1-D-ribitylamino)pyrimidin-4(3H)-one 5'-phosphate + NADP(+) = 2,5-diamino-6-(1-D-ribosylamino)pyrimidin-4(3H)-one 5'-phosphate + NADPH + H(+). The enzyme catalyses 2,5-diamino-6-(1-D-ribitylamino)pyrimidin-4(3H)-one 5'-phosphate + NAD(+) = 2,5-diamino-6-(1-D-ribosylamino)pyrimidin-4(3H)-one 5'-phosphate + NADH + H(+). Its pathway is cofactor biosynthesis; riboflavin biosynthesis. Catalyzes an early step in riboflavin biosynthesis, the NADPH-dependent reduction of the ribose side chain of 2,5-diamino-6-ribosylamino-4(3H)-pyrimidinone 5'-phosphate, yielding 2,5-diamino-6-ribitylamino-4(3H)-pyrimidinone 5'-phosphate. This chain is 2,5-diamino-6-ribosylamino-4(3H)-pyrimidinone 5'-phosphate reductase (RIB7), found in Saccharomyces cerevisiae (strain ATCC 204508 / S288c) (Baker's yeast).